The primary structure comprises 441 residues: BTB/POZ domain-containing protein At4g30940 (441 aa).

Residues 6 to 74 form the BTB domain; sequence DRIKFNVGGR…LRTGDLNIPP (69 aa).

Its pathway is protein modification; protein ubiquitination. Its function is as follows. May act as a substrate-specific adapter of an E3 ubiquitin-protein ligase complex (CUL3-RBX1-BTB) which mediates the ubiquitination and subsequent proteasomal degradation of target proteins. This Arabidopsis thaliana (Mouse-ear cress) protein is BTB/POZ domain-containing protein At4g30940.